The sequence spans 314 residues: tRNA pseudouridine synthase B (314 aa).

His-43 lines the substrate pocket. Asp-48 acts as the Nucleophile in catalysis. Substrate is bound by residues Tyr-76, Tyr-179, and Leu-200.

This sequence belongs to the pseudouridine synthase TruB family. Type 1 subfamily.

It carries out the reaction uridine(55) in tRNA = pseudouridine(55) in tRNA. Functionally, responsible for synthesis of pseudouridine from uracil-55 in the psi GC loop of transfer RNAs. The protein is tRNA pseudouridine synthase B of Shigella dysenteriae serotype 1 (strain Sd197).